The primary structure comprises 232 residues: 2,3-bisphosphoglycerate-dependent phosphoglycerate mutase (232 aa).

Substrate contacts are provided by residues 8 to 15, 21 to 22, arginine 60, 87 to 90, lysine 98, 114 to 115, and 183 to 184; these read RHGESLWN, TG, ERHY, RR, and GN. Catalysis depends on histidine 9, which acts as the Tele-phosphohistidine intermediate. Glutamate 87 acts as the Proton donor/acceptor in catalysis.

It belongs to the phosphoglycerate mutase family. BPG-dependent PGAM subfamily.

The catalysed reaction is (2R)-2-phosphoglycerate = (2R)-3-phosphoglycerate. Its pathway is carbohydrate degradation; glycolysis; pyruvate from D-glyceraldehyde 3-phosphate: step 3/5. Catalyzes the interconversion of 2-phosphoglycerate and 3-phosphoglycerate. In Clostridium beijerinckii (strain ATCC 51743 / NCIMB 8052) (Clostridium acetobutylicum), this protein is 2,3-bisphosphoglycerate-dependent phosphoglycerate mutase.